A 483-amino-acid chain; its full sequence is Altronate oxidoreductase (483 aa).

Position 18 to 29 (18 to 29 (IIQFGEGNFLRA)) interacts with NAD(+).

This sequence belongs to the mannitol dehydrogenase family. UxaB subfamily.

It catalyses the reaction D-altronate + NAD(+) = keto-D-tagaturonate + NADH + H(+). It participates in carbohydrate metabolism; pentose and glucuronate interconversion. The protein is Altronate oxidoreductase of Klebsiella pneumoniae (strain 342).